The sequence spans 598 residues: CBP80/20-dependent translation initiation factor (598 aa).

Met-1 is modified (N-acetylmethionine). Low complexity predominate over residues 1-18; that stretch reads MENSSAASASSEAGSSRS. Disordered stretches follow at residues 1–20, 43–90, and 180–336; these read MENSSAASASSEAGSSRSQE, DKTE…SKDN, and IAHT…RIGE. The interval 1–305 is interaction with NCBP1/CBP80; that stretch reads MENSSAASAS…APRSPDTLAP (305 aa). Ser-18 is subject to Phosphoserine. Residues 43–55 are compositionally biased toward basic and acidic residues; it reads DKTEGDGESERTQ. Positions 56–75 are enriched in polar residues; it reads SHISQWTADCSEPLDSSCSF. The span at 183–198 shows a compositional bias: basic residues; that stretch reads TKKLFRRRRNDRRRQQ. A compositionally biased stretch (basic and acidic residues) spans 258–272; the sequence is PPGDKGEAGAHRNAK. Thr-289 carries the post-translational modification Phosphothreonine. Ser-299 bears the Phosphoserine mark. Residues 321–336 are compositionally biased toward basic and acidic residues; sequence VETKRKDSILPERIGE. The MIF4G domain maps to 376–577; it reads IEILNSMRNN…LEVIELHANS (202 aa).

This sequence belongs to the CTIF family. Interacts with NCBP1/CBP80; the interaction is direct. Associates with the eukaryotic translation initiation factor 3 (eIF-3) complex. Widely expressed.

Its subcellular location is the cytoplasm. It localises to the perinuclear region. Functionally, specifically required for the pioneer round of mRNA translation mediated by the cap-binding complex (CBC), that takes place during or right after mRNA export via the nuclear pore complex (NPC). Acts via its interaction with the NCBP1/CBP80 component of the CBC complex and recruits the 40S small subunit of the ribosome via eIF3. In contrast, it is not involved in steady state translation, that takes place when the CBC complex is replaced by cytoplasmic cap-binding protein eIF4E. Also required for nonsense-mediated mRNA decay (NMD), the pioneer round of mRNA translation mediated by the cap-binding complex playing a central role in nonsense-mediated mRNA decay (NMD). The chain is CBP80/20-dependent translation initiation factor (CTIF) from Homo sapiens (Human).